Consider the following 528-residue polypeptide: GMP synthase [glutamine-hydrolyzing] (528 aa).

The region spanning 3-199 is the Glutamine amidotransferase type-1 domain; it reads KVAIIDFGSQ…FLDIAGCQKD (197 aa). Cys-83 serves as the catalytic Nucleophile. Catalysis depends on residues His-174 and Glu-176. The region spanning 200–394 is the GMPS ATP-PPase domain; that stretch reads WTVTSFIDDQ…LGISTEILMR (195 aa). 227–233 lines the ATP pocket; that stretch reads SGGVDSS.

In terms of assembly, homodimer.

The enzyme catalyses XMP + L-glutamine + ATP + H2O = GMP + L-glutamate + AMP + diphosphate + 2 H(+). It functions in the pathway purine metabolism; GMP biosynthesis; GMP from XMP (L-Gln route): step 1/1. Catalyzes the synthesis of GMP from XMP. This Ehrlichia ruminantium (strain Gardel) protein is GMP synthase [glutamine-hydrolyzing].